The following is a 751-amino-acid chain: Proton-associated sugar transporter A (751 aa).

Transmembrane regions (helical) follow at residues 93–113 (ILFG…PVLL), 123–143 (SLVW…LGAW), 155–175 (RPFI…LLNG), 191–211 (WGIL…DSAD), 233–253 (IHAL…GIHW), and 268–288 (VIYI…LVSI). At Thr-500 the chain carries Phosphothreonine. 6 consecutive transmembrane segments (helical) span residues 536 to 556 (GWLS…EVVF), 576 to 596 (VTMG…YSAI), 606 to 626 (VRTL…LATL), 630 to 650 (LYVV…LCTL), 688 to 708 (FLAQ…VGSA), and 710 to 730 (GVMY…SLCV).

It belongs to the glycoside-pentoside-hexuronide (GPH) cation symporter transporter (TC 2.A.2) family. Predominantly expressed in brain.

It is found in the membrane. The enzyme catalyses D-galactose(in) + H(+)(in) = D-galactose(out) + H(+)(out). It catalyses the reaction D-glucose(out) + H(+)(out) = D-glucose(in) + H(+)(in). In terms of biological role, proton-associated glucose transporter in the brain. The protein is Proton-associated sugar transporter A of Rattus norvegicus (Rat).